Reading from the N-terminus, the 547-residue chain is uncharacterized protein (547 aa).

The protein to B.subtilis RocB.

This is an uncharacterized protein from Bacillus subtilis (strain 168).